Reading from the N-terminus, the 146-residue chain is Large ribosomal subunit protein uL13 (146 aa).

The protein belongs to the universal ribosomal protein uL13 family. As to quaternary structure, part of the 50S ribosomal subunit.

Its function is as follows. This protein is one of the early assembly proteins of the 50S ribosomal subunit, although it is not seen to bind rRNA by itself. It is important during the early stages of 50S assembly. In Borreliella burgdorferi (strain ATCC 35210 / DSM 4680 / CIP 102532 / B31) (Borrelia burgdorferi), this protein is Large ribosomal subunit protein uL13.